Consider the following 195-residue polypeptide: Probable nicotinate-nucleotide adenylyltransferase (195 aa).

This sequence belongs to the NadD family.

It carries out the reaction nicotinate beta-D-ribonucleotide + ATP + H(+) = deamido-NAD(+) + diphosphate. It functions in the pathway cofactor biosynthesis; NAD(+) biosynthesis; deamido-NAD(+) from nicotinate D-ribonucleotide: step 1/1. Its function is as follows. Catalyzes the reversible adenylation of nicotinate mononucleotide (NaMN) to nicotinic acid adenine dinucleotide (NaAD). In Chlorobaculum parvum (strain DSM 263 / NCIMB 8327) (Chlorobium vibrioforme subsp. thiosulfatophilum), this protein is Probable nicotinate-nucleotide adenylyltransferase.